Reading from the N-terminus, the 203-residue chain is Small ribosomal subunit protein uS4c (203 aa).

The region spanning 91 to 159 is the S4 RNA-binding domain; the sequence is MRLDNIIFRL…ISKNIEFYQK (69 aa).

The protein belongs to the universal ribosomal protein uS4 family. Part of the 30S ribosomal subunit. Contacts protein S5. The interaction surface between S4 and S5 is involved in control of translational fidelity.

Its subcellular location is the plastid. It is found in the chloroplast. Functionally, one of the primary rRNA binding proteins, it binds directly to 16S rRNA where it nucleates assembly of the body of the 30S subunit. In terms of biological role, with S5 and S12 plays an important role in translational accuracy. In Lopidium concinnum (Moss), this protein is Small ribosomal subunit protein uS4c (rps4).